Here is a 598-residue protein sequence, read N- to C-terminus: Torsin-1A-interacting protein 1 (598 aa).

The Nuclear segment spans residues 1 to 351 (MAGEGRRAEA…PQNASFVKRN (351 aa)). Disordered regions lie at residues 19 to 254 (VTPR…RSSS) and 267 to 314 (QNFT…IYGS). The residue at position 60 (Ser60) is a Phosphoserine. Composition is skewed to basic and acidic residues over residues 73–101 (LVDK…EVRE) and 115–124 (RPQEAEEMKT). 6 positions are modified to phosphoserine: Ser135, Ser143, Ser154, Ser156, Ser157, and Ser187. Residues 205 to 214 (EATSVQQKVN) show a composition bias toward polar residues. Position 216 is a phosphoserine (Ser216). Thr221 carries the post-translational modification Phosphothreonine. A phosphoserine mark is found at Ser227, Ser230, and Ser242. Over residues 238-250 (RSRDSDESGDKTT) the composition is skewed to basic and acidic residues. Composition is skewed to polar residues over residues 277-287 (SVLSSGYQKTP) and 300-313 (RMQT…SIYG). Phosphoserine is present on Ser320. The interval 322–341 (LKSELGNQSPSTSSQQVTGQ) is disordered. Lys323 participates in a covalent cross-link: Glycyl lysine isopeptide (Lys-Gly) (interchain with G-Cter in SUMO2). Residues 326–341 (LGNQSPSTSSQQVTGQ) are compositionally biased toward polar residues. Residue Ser330 is modified to Phosphoserine. A helical membrane pass occupies residues 352–372 (WWWLLPLIAALASGSFWFFST). The segment at 371-598 (STPEVETTAV…ENALKRGICL (228 aa)) is interaction with TOR1A. At 373–598 (PEVETTAVQE…ENALKRGICL (226 aa)) the chain is on the perinuclear space side. Positions 374-450 (EVETTAVQEF…SEQIADAYSS (77 aa)) form a coiled coil. N-linked (GlcNAc...) asparagine glycosylation is present at Asn414.

The protein belongs to the TOR1AIP family. Interacts with ATP1B4. Interacts with TOR1A (ATP-bound). Interacts with TOR1B, TOR2A and TOR3A.

It is found in the nucleus inner membrane. Required for nuclear membrane integrity. Induces TOR1A and TOR1B ATPase activity and is required for their location on the nuclear membrane. Binds to A- and B-type lamins. Possible role in membrane attachment and assembly of the nuclear lamina. The sequence is that of Torsin-1A-interacting protein 1 (TOR1AIP1) from Pongo abelii (Sumatran orangutan).